A 59-amino-acid chain; its full sequence is Small, acid-soluble spore protein H 1 (59 aa).

Belongs to the SspH family.

The protein resides in the spore core. This is Small, acid-soluble spore protein H 1 (sspH1) from Bacillus cereus (strain ATCC 14579 / DSM 31 / CCUG 7414 / JCM 2152 / NBRC 15305 / NCIMB 9373 / NCTC 2599 / NRRL B-3711).